Reading from the N-terminus, the 332-residue chain is Transaldolase (332 aa).

The active-site Schiff-base intermediate with substrate is the K136.

The protein belongs to the transaldolase family. Type 1 subfamily.

It is found in the cytoplasm. The catalysed reaction is D-sedoheptulose 7-phosphate + D-glyceraldehyde 3-phosphate = D-erythrose 4-phosphate + beta-D-fructose 6-phosphate. Its pathway is carbohydrate degradation; pentose phosphate pathway; D-glyceraldehyde 3-phosphate and beta-D-fructose 6-phosphate from D-ribose 5-phosphate and D-xylulose 5-phosphate (non-oxidative stage): step 2/3. In terms of biological role, transaldolase is important for the balance of metabolites in the pentose-phosphate pathway. This Nostoc sp. (strain PCC 7120 / SAG 25.82 / UTEX 2576) protein is Transaldolase.